We begin with the raw amino-acid sequence, 66 residues long: Toxin Aah6 (66 aa).

The 64-residue stretch at 2–65 (RDGYVVKNGT…LYGDDGTYCS (64 aa)) folds into the LCN-type CS-alpha/beta domain. N-linked (GlcNAc...) asparagine glycosylation is present at Asn9. 4 disulfide bridges follow: Cys13–Cys64, Cys17–Cys40, Cys26–Cys45, and Cys30–Cys47.

It belongs to the long (4 C-C) scorpion toxin superfamily. Sodium channel inhibitor family. Beta subfamily. N-glycans are core-fucosylated, heterogeneous and short which could be the result of extensive trimming. Expressed by the venom gland.

It localises to the secreted. Functionally, beta toxins bind voltage-independently at site-4 of sodium channels and shift the voltage of activation toward more negative potentials thereby affecting sodium channel activation and promoting spontaneous and repetitive firing. This toxin is active only on insects. This toxin has very low anti-insect activity. The protein is Toxin Aah6 of Androctonus australis (Sahara scorpion).